The chain runs to 110 residues: UPF0060 membrane protein MT2717 (110 aa).

4 helical membrane passes run Ile-6 to Gly-26, Gly-32 to Leu-52, Val-61 to Asp-81, and Val-90 to His-110.

This sequence belongs to the UPF0060 family.

The protein localises to the cell membrane. This chain is UPF0060 membrane protein MT2717, found in Mycobacterium tuberculosis (strain CDC 1551 / Oshkosh).